Here is a 215-residue protein sequence, read N- to C-terminus: Chaperone protein TorD (215 aa).

It belongs to the TorD/DmsD family. TorD subfamily.

It localises to the cytoplasm. Its function is as follows. Involved in the biogenesis of TorA. Acts on TorA before the insertion of the molybdenum cofactor and, as a result, probably favors a conformation of the apoenzyme that is competent for acquiring the cofactor. The sequence is that of Chaperone protein TorD from Aliivibrio fischeri (strain ATCC 700601 / ES114) (Vibrio fischeri).